Here is a 458-residue protein sequence, read N- to C-terminus: KAT8 regulatory NSL complex subunit 2 (458 aa).

A Glycyl lysine isopeptide (Lys-Gly) (interchain with G-Cter in SUMO2) cross-link involves residue K78. Positions 126 to 182 (ELGSQTPESSRSEASRILDEDSWSDGDQEPITVDQTWRGDPDSEADSIDSDQEDPLK) are disordered. T131 carries the phosphothreonine modification. Residues 135–144 (SRSEASRILD) show a composition bias toward basic and acidic residues. 5 positions are modified to phosphoserine: S147, S149, S168, S172, and S175. The span at 167 to 178 (DSEADSIDSDQE) shows a compositional bias: acidic residues. Residues 308–364 (DVRCSNQSLPMTRHCLTHICQDTNQVLFKCCQGSEEVPCNKPVPVSLSEDPCCPLHF) form a required for interaction with other NSL complex members region. The tract at residues 419 to 458 (QMAGDGCRSQGPRNSEKAPAPLPQSGIATANGKPEPTSVS) is disordered.

In terms of assembly, component of the NSL complex at least composed of KAT8/MOF, KANSL1, KANSL2, KANSL3, MCRS1, PHF20, OGT1/OGT, WDR5 and HCFC1.

The protein localises to the nucleus. Its subcellular location is the mitochondrion. Functionally, non-catalytic component of the NSL histone acetyltransferase complex, a multiprotein complex that mediates histone H4 acetylation at 'Lys-5'- and 'Lys-8' (H4K5ac and H4K8ac) at transcription start sites and promotes transcription initiation. Required for NSL complex stability and for transcription of intraciliary transport genes in both ciliated and non-ciliated cells by regulating histone H4 acetylation at 'Lys-5'- and 'Lys-12' (H4K5ac and H4K12ac). This is necessary for cilium assembly in ciliated cells and for organization of the microtubule cytoskeleton in non-ciliated cells. Required within the NSL complex to maintain nuclear architecture stability by promoting KAT8-mediated acetylation of lamin LMNA. The sequence is that of KAT8 regulatory NSL complex subunit 2 (KANSL2) from Bos taurus (Bovine).